We begin with the raw amino-acid sequence, 46 residues long: Protein PsbN (46 aa).

The helical transmembrane segment at Ala7–Tyr27 threads the bilayer.

This sequence belongs to the PsbN family.

Its subcellular location is the cellular thylakoid membrane. Functionally, may play a role in photosystem I and II biogenesis. In Synechococcus sp. (strain CC9605), this protein is Protein PsbN.